The chain runs to 291 residues: Acetylglutamate kinase (291 aa).

Substrate contacts are provided by residues 61–62 (GG), R83, and N187.

Belongs to the acetylglutamate kinase family. ArgB subfamily.

It localises to the cytoplasm. It catalyses the reaction N-acetyl-L-glutamate + ATP = N-acetyl-L-glutamyl 5-phosphate + ADP. It participates in amino-acid biosynthesis; L-arginine biosynthesis; N(2)-acetyl-L-ornithine from L-glutamate: step 2/4. Functionally, catalyzes the ATP-dependent phosphorylation of N-acetyl-L-glutamate. This chain is Acetylglutamate kinase, found in Methanoregula boonei (strain DSM 21154 / JCM 14090 / 6A8).